Here is a 289-residue protein sequence, read N- to C-terminus: Phosphatidylserine decarboxylase proenzyme (289 aa).

Residues aspartate 92, histidine 149, and serine 254 each act as charge relay system; for autoendoproteolytic cleavage activity in the active site. Serine 254 serves as the catalytic Schiff-base intermediate with substrate; via pyruvic acid; for decarboxylase activity. Serine 254 is modified (pyruvic acid (Ser); by autocatalysis).

Belongs to the phosphatidylserine decarboxylase family. PSD-B subfamily. Prokaryotic type I sub-subfamily. As to quaternary structure, heterodimer of a large membrane-associated beta subunit and a small pyruvoyl-containing alpha subunit. The cofactor is pyruvate. In terms of processing, is synthesized initially as an inactive proenzyme. Formation of the active enzyme involves a self-maturation process in which the active site pyruvoyl group is generated from an internal serine residue via an autocatalytic post-translational modification. Two non-identical subunits are generated from the proenzyme in this reaction, and the pyruvate is formed at the N-terminus of the alpha chain, which is derived from the carboxyl end of the proenzyme. The autoendoproteolytic cleavage occurs by a canonical serine protease mechanism, in which the side chain hydroxyl group of the serine supplies its oxygen atom to form the C-terminus of the beta chain, while the remainder of the serine residue undergoes an oxidative deamination to produce ammonia and the pyruvoyl prosthetic group on the alpha chain. During this reaction, the Ser that is part of the protease active site of the proenzyme becomes the pyruvoyl prosthetic group, which constitutes an essential element of the active site of the mature decarboxylase.

The protein resides in the cell membrane. The catalysed reaction is a 1,2-diacyl-sn-glycero-3-phospho-L-serine + H(+) = a 1,2-diacyl-sn-glycero-3-phosphoethanolamine + CO2. Its pathway is phospholipid metabolism; phosphatidylethanolamine biosynthesis; phosphatidylethanolamine from CDP-diacylglycerol: step 2/2. Its function is as follows. Catalyzes the formation of phosphatidylethanolamine (PtdEtn) from phosphatidylserine (PtdSer). In Pseudomonas aeruginosa (strain LESB58), this protein is Phosphatidylserine decarboxylase proenzyme.